The primary structure comprises 153 residues: Transcriptional repressor NrdR (153 aa).

A zinc finger spans residues 3–34; it reads CPFCHNQDTRVIDSRAAEEGTAIRRRRSCPAC. The region spanning 46-136 is the ATP-cone domain; that stretch reads LMVTKRSGAT…VYRSFESLED (91 aa).

Belongs to the NrdR family. Zn(2+) is required as a cofactor.

Its function is as follows. Negatively regulates transcription of bacterial ribonucleotide reductase nrd genes and operons by binding to NrdR-boxes. The polypeptide is Transcriptional repressor NrdR (Thermobifida fusca (strain YX)).